The chain runs to 148 residues: Large ribosomal subunit protein bL9 (148 aa).

Belongs to the bacterial ribosomal protein bL9 family.

Binds to the 23S rRNA. This Staphylococcus haemolyticus (strain JCSC1435) protein is Large ribosomal subunit protein bL9.